The primary structure comprises 227 residues: Eukaryotic translation initiation factor NCBP (227 aa).

Residues Met1–Pro22 show a composition bias toward basic and acidic residues. The interval Met1–Glu43 is disordered. Over residues Ala27 to Glu36 the composition is skewed to acidic residues.

It belongs to the eukaryotic initiation factor 4E family. In terms of assembly, EIF4F is a multi-subunit complex, the composition of which varies with external and internal environmental conditions. It is composed of at least EIF4A, EIF4E and EIF4G. EIF4E is also known to interact with other partners. In higher plants two isoforms of EIF4F have been identified, named isoform EIF4F and isoform EIF(iso)4F. Isoform EIF4F has subunits p220 and p26, whereas isoform EIF(iso)4F has subunits p82 and p28.

In terms of biological role, recognizes and binds the 7-methylguanosine-containing mRNA cap during an early step in the initiation of protein synthesis and facilitates ribosome binding by inducing the unwinding of the mRNAs secondary structures. This Oryza sativa subsp. japonica (Rice) protein is Eukaryotic translation initiation factor NCBP (NCBP).